Consider the following 225-residue polypeptide: Acidic leucine-rich nuclear phosphoprotein 32-related protein 2 (225 aa).

LRR repeat units follow at residues 39–60 (KLEL…PVLP), 61–82 (ALNY…DVLI), and 87–107 (EIKK…RTLK). The 41-residue stretch at 121-161 (SSLGLLDDYRVKMFEMIPSLKILDGCDVDGEEVEEEFAAGE) folds into the LRRCT domain. Positions 155–175 (EEFAAGEGAEDSDEGDSDEDG) are enriched in acidic residues. The interval 155–225 (EEFAAGEGAE…DEPEAKKSAE (71 aa)) is disordered.

Belongs to the ANP32 family.

This is Acidic leucine-rich nuclear phosphoprotein 32-related protein 2 from Caenorhabditis elegans.